A 366-amino-acid polypeptide reads, in one-letter code: 1-deoxy-D-xylulose 5-phosphate reductoisomerase (366 aa).

Residues threonine 7, glycine 8, serine 9, isoleucine 10, glycine 31, asparagine 33, and asparagine 111 each contribute to the NADPH site. Lysine 112 is a 1-deoxy-D-xylulose 5-phosphate binding site. Glutamate 113 lines the NADPH pocket. Aspartate 131 contacts Mn(2+). Residues serine 132, glutamate 133, serine 162, and histidine 185 each contribute to the 1-deoxy-D-xylulose 5-phosphate site. Mn(2+) is bound at residue glutamate 133. Residue glycine 191 participates in NADPH binding. Positions 198, 203, 204, and 207 each coordinate 1-deoxy-D-xylulose 5-phosphate. Position 207 (glutamate 207) interacts with Mn(2+).

The protein belongs to the DXR family. It depends on Mg(2+) as a cofactor. Mn(2+) serves as cofactor.

The enzyme catalyses 2-C-methyl-D-erythritol 4-phosphate + NADP(+) = 1-deoxy-D-xylulose 5-phosphate + NADPH + H(+). Its pathway is isoprenoid biosynthesis; isopentenyl diphosphate biosynthesis via DXP pathway; isopentenyl diphosphate from 1-deoxy-D-xylulose 5-phosphate: step 1/6. Functionally, catalyzes the NADPH-dependent rearrangement and reduction of 1-deoxy-D-xylulose-5-phosphate (DXP) to 2-C-methyl-D-erythritol 4-phosphate (MEP). The protein is 1-deoxy-D-xylulose 5-phosphate reductoisomerase of Nautilia profundicola (strain ATCC BAA-1463 / DSM 18972 / AmH).